The primary structure comprises 469 residues: Glutamate--tRNA ligase (469 aa).

The short motif at 9–19 (PSPTGYLHVGG) is the 'HIGH' region element. 4 residues coordinate Zn(2+): Cys98, Cys100, Cys125, and Asp127. The short motif at 237–241 (KLSKR) is the 'KMSKS' region element. Lys240 provides a ligand contact to ATP.

The protein belongs to the class-I aminoacyl-tRNA synthetase family. Glutamate--tRNA ligase type 1 subfamily. In terms of assembly, monomer. Requires Zn(2+) as cofactor.

The protein localises to the cytoplasm. It catalyses the reaction tRNA(Glu) + L-glutamate + ATP = L-glutamyl-tRNA(Glu) + AMP + diphosphate. Its function is as follows. Catalyzes the attachment of glutamate to tRNA(Glu) in a two-step reaction: glutamate is first activated by ATP to form Glu-AMP and then transferred to the acceptor end of tRNA(Glu). This is Glutamate--tRNA ligase from Serratia proteamaculans (strain 568).